Reading from the N-terminus, the 426-residue chain is Serine--tRNA ligase (426 aa).

Residue 230–232 (TAE) coordinates L-serine. Residue 261–263 (RSE) coordinates ATP. L-serine is bound at residue Glu284. 348–351 (EISS) contributes to the ATP binding site. Position 384 (Ser384) interacts with L-serine.

The protein belongs to the class-II aminoacyl-tRNA synthetase family. Type-1 seryl-tRNA synthetase subfamily. As to quaternary structure, homodimer. The tRNA molecule binds across the dimer.

It is found in the cytoplasm. It catalyses the reaction tRNA(Ser) + L-serine + ATP = L-seryl-tRNA(Ser) + AMP + diphosphate + H(+). It carries out the reaction tRNA(Sec) + L-serine + ATP = L-seryl-tRNA(Sec) + AMP + diphosphate + H(+). The protein operates within aminoacyl-tRNA biosynthesis; selenocysteinyl-tRNA(Sec) biosynthesis; L-seryl-tRNA(Sec) from L-serine and tRNA(Sec): step 1/1. Its function is as follows. Catalyzes the attachment of serine to tRNA(Ser). Is also able to aminoacylate tRNA(Sec) with serine, to form the misacylated tRNA L-seryl-tRNA(Sec), which will be further converted into selenocysteinyl-tRNA(Sec). The protein is Serine--tRNA ligase of Phenylobacterium zucineum (strain HLK1).